The following is a 320-amino-acid chain: Mas-related G-protein coupled receptor member D (320 aa).

At 1 to 33 (MNQTLNSSGTAELALNHSRGSVVHAACLVLSSL) the chain is on the extracellular side. N-linked (GlcNAc...) asparagine glycans are attached at residues N2, N6, and N16. A helical membrane pass occupies residues 34–54 (AMFTCLCGMAGNSMVIWLLGF). The Cytoplasmic portion of the chain corresponds to 55-62 (RMRRTPFS). Residues 63-83 (IYILNLAAADLLFVFCMAAML) form a helical membrane-spanning segment. At 84–112 (SLETQPLVSTTDKVHELMKRLKYFAYTVG) the chain is on the extracellular side. A helical membrane pass occupies residues 113–133 (LSLLTAISTQRCLSVLFPIWF). At 134–142 (KCHRPRHLS) the chain is on the cytoplasmic side. Residues 143–163 (AWVCALLWMLCLLTNGLTSCF) form a helical membrane-spanning segment. Residues 164–182 (CSKFLKFNKDQCFRVDMVQ) lie on the Extracellular side of the membrane. A helical membrane pass occupies residues 183–203 (AALIMGVLTPVMTLSSLTLFV). Residues 204 to 218 (RVRRSSQQWRRQPTR) are Cytoplasmic-facing. The chain crosses the membrane as a helical span at residues 219-239 (LFVVVLASVLVFLICSLPLGF). Topologically, residues 240–257 (YWFVLYWLNLPPDTKVLY) are extracellular. A helical membrane pass occupies residues 258–280 (FNLSRLSSSMSSSANPLIYFLVG). Topologically, residues 281–320 (SRRSRRLQGSLGTVLQRALREEPELEGGETPTTGTNEMGA) are cytoplasmic. The tract at residues 301–320 (EEPELEGGETPTTGTNEMGA) is disordered. Residues 308-320 (GETPTTGTNEMGA) are compositionally biased toward low complexity.

Belongs to the G-protein coupled receptor 1 family. Mas subfamily. As to expression, co-expressed in the small diameter neurons with P2X3 and VR1 in dorsal root ganglia.

The protein localises to the cell membrane. Its function is as follows. May regulate nociceptor function and/or development, including the sensation or modulation of pain. Functions as a specific membrane receptor for beta-alanine. The receptor couples with G-protein G(q) and G(i). This Macaca fascicularis (Crab-eating macaque) protein is Mas-related G-protein coupled receptor member D (MRGPRD).